The following is a 62-amino-acid chain: Photosystem II reaction center protein Z (62 aa).

The next 2 membrane-spanning stretches (helical) occupy residues 8-28 and 41-61; these read AVFALIAISFLLVIGVPVVLA and FSGASLWIGLVFLVGILNSFI.

This sequence belongs to the PsbZ family. PSII is composed of 1 copy each of membrane proteins PsbA, PsbB, PsbC, PsbD, PsbE, PsbF, PsbH, PsbI, PsbJ, PsbK, PsbL, PsbM, PsbT, PsbY, PsbZ, Psb30/Ycf12, at least 3 peripheral proteins of the oxygen-evolving complex and a large number of cofactors. It forms dimeric complexes.

It localises to the plastid. The protein resides in the chloroplast thylakoid membrane. May control the interaction of photosystem II (PSII) cores with the light-harvesting antenna, regulates electron flow through the 2 photosystem reaction centers. PSII is a light-driven water plastoquinone oxidoreductase, using light energy to abstract electrons from H(2)O, generating a proton gradient subsequently used for ATP formation. This Marchantia polymorpha (Common liverwort) protein is Photosystem II reaction center protein Z.